The chain runs to 130 residues: Small ribosomal subunit protein uS11c (130 aa).

It belongs to the universal ribosomal protein uS11 family. In terms of assembly, part of the 30S ribosomal subunit.

It localises to the plastid. The protein resides in the chloroplast. In Phaeodactylum tricornutum (strain CCAP 1055/1), this protein is Small ribosomal subunit protein uS11c.